We begin with the raw amino-acid sequence, 172 residues long: Crossover junction endodeoxyribonuclease RuvC (172 aa).

Residues Asp8, Glu67, and Asp139 contribute to the active site. Residues Asp8, Glu67, and Asp139 each coordinate Mg(2+).

Belongs to the RuvC family. As to quaternary structure, homodimer which binds Holliday junction (HJ) DNA. The HJ becomes 2-fold symmetrical on binding to RuvC with unstacked arms; it has a different conformation from HJ DNA in complex with RuvA. In the full resolvosome a probable DNA-RuvA(4)-RuvB(12)-RuvC(2) complex forms which resolves the HJ. It depends on Mg(2+) as a cofactor.

Its subcellular location is the cytoplasm. The catalysed reaction is Endonucleolytic cleavage at a junction such as a reciprocal single-stranded crossover between two homologous DNA duplexes (Holliday junction).. Its function is as follows. The RuvA-RuvB-RuvC complex processes Holliday junction (HJ) DNA during genetic recombination and DNA repair. Endonuclease that resolves HJ intermediates. Cleaves cruciform DNA by making single-stranded nicks across the HJ at symmetrical positions within the homologous arms, yielding a 5'-phosphate and a 3'-hydroxyl group; requires a central core of homology in the junction. The consensus cleavage sequence is 5'-(A/T)TT(C/G)-3'. Cleavage occurs on the 3'-side of the TT dinucleotide at the point of strand exchange. HJ branch migration catalyzed by RuvA-RuvB allows RuvC to scan DNA until it finds its consensus sequence, where it cleaves and resolves the cruciform DNA. This chain is Crossover junction endodeoxyribonuclease RuvC, found in Hahella chejuensis (strain KCTC 2396).